A 127-amino-acid chain; its full sequence is UPF0325 protein VV1_1856 (127 aa).

It belongs to the UPF0325 family.

The protein is UPF0325 protein VV1_1856 of Vibrio vulnificus (strain CMCP6).